We begin with the raw amino-acid sequence, 267 residues long: tRNA-cytidine(32) 2-sulfurtransferase 1 (267 aa).

A PP-loop motif motif is present at residues 42 to 47 (SGGKDS). Positions 117, 120, and 208 each coordinate [4Fe-4S] cluster.

The protein belongs to the TtcA family. Homodimer. Requires Mg(2+) as cofactor. The cofactor is [4Fe-4S] cluster.

Its subcellular location is the cytoplasm. The catalysed reaction is cytidine(32) in tRNA + S-sulfanyl-L-cysteinyl-[cysteine desulfurase] + AH2 + ATP = 2-thiocytidine(32) in tRNA + L-cysteinyl-[cysteine desulfurase] + A + AMP + diphosphate + H(+). It functions in the pathway tRNA modification. In terms of biological role, catalyzes the ATP-dependent 2-thiolation of cytidine in position 32 of tRNA, to form 2-thiocytidine (s(2)C32). The sulfur atoms are provided by the cysteine/cysteine desulfurase (IscS) system. This is tRNA-cytidine(32) 2-sulfurtransferase 1 from Francisella tularensis subsp. novicida (strain U112).